The sequence spans 490 residues: GTPase Der (490 aa).

2 consecutive EngA-type G domains span residues 1–165 (MRIA…QIPV) and 227–400 (LKVA…TIAT). Residues 7–14 (GRPNVGKS), 54–58 (DTGGV), 117–120 (NKAD), 233–240 (GHPNVGKS), 280–284 (DTAGL), and 345–348 (NKWD) contribute to the GTP site. The region spanning 401–485 (TKLSTSLVNK…PFDLEYKAKP (85 aa)) is the KH-like domain.

This sequence belongs to the TRAFAC class TrmE-Era-EngA-EngB-Septin-like GTPase superfamily. EngA (Der) GTPase family. Associates with the 50S ribosomal subunit.

In terms of biological role, GTPase that plays an essential role in the late steps of ribosome biogenesis. The protein is GTPase Der of Chlamydia trachomatis serovar A (strain ATCC VR-571B / DSM 19440 / HAR-13).